The following is a 513-amino-acid chain: ATP synthase subunit alpha (513 aa).

An ATP-binding site is contributed by G169–S176.

It belongs to the ATPase alpha/beta chains family. F-type ATPases have 2 components, CF(1) - the catalytic core - and CF(0) - the membrane proton channel. CF(1) has five subunits: alpha(3), beta(3), gamma(1), delta(1), epsilon(1). CF(0) has three main subunits: a(1), b(2) and c(9-12). The alpha and beta chains form an alternating ring which encloses part of the gamma chain. CF(1) is attached to CF(0) by a central stalk formed by the gamma and epsilon chains, while a peripheral stalk is formed by the delta and b chains.

The protein localises to the cell membrane. It carries out the reaction ATP + H2O + 4 H(+)(in) = ADP + phosphate + 5 H(+)(out). Functionally, produces ATP from ADP in the presence of a proton gradient across the membrane. The alpha chain is a regulatory subunit. The protein is ATP synthase subunit alpha of Baumannia cicadellinicola subsp. Homalodisca coagulata.